Consider the following 349-residue polypeptide: 1-acylglycerol-3-phosphate O-acyltransferase ABHD5 (349 aa).

Alanine 2 carries the post-translational modification N-acetylalanine. In terms of domain architecture, AB hydrolase-1 spans 77 to 184; the sequence is PLVLLHGFGG…LVEPWGFPER (108 aa). Serine 122 carries the phosphoserine modification. The HXXXXD motif signature appears at 327-332; sequence HYVYAD.

This sequence belongs to the peptidase S33 family. ABHD4/ABHD5 subfamily. As to quaternary structure, interacts with ADRP, PLIN and PNPLA2. Interacts with PLIN5; promotes interaction with PNPLA2. As to expression, widely expressed in various tissues, including lymphocytes, liver, skeletal muscle and brain. Expressed by upper epidermal layers and dermal fibroblasts in skin, hepatocytes and neurons (at protein level).

It localises to the cytoplasm. It is found in the lipid droplet. The protein localises to the cytosol. It carries out the reaction a 1-acyl-sn-glycero-3-phosphate + an acyl-CoA = a 1,2-diacyl-sn-glycero-3-phosphate + CoA. It catalyses the reaction 1-(9Z-octadecenoyl)-sn-glycero-3-phosphate + hexadecanoyl-CoA = 1-(9Z)-octadecenoyl-2-hexadecanoyl-sn-glycero-3-phosphate + CoA. The enzyme catalyses 1-(9Z-octadecenoyl)-sn-glycero-3-phosphate + octadecanoyl-CoA = 1-(9Z-octadecenoyl)-2-octadecanoyl-sn-glycero-3-phosphate + CoA. The catalysed reaction is 1-(9Z-octadecenoyl)-sn-glycero-3-phosphate + (9Z)-octadecenoyl-CoA = 1,2-di-(9Z-octadecenoyl)-sn-glycero-3-phosphate + CoA. It carries out the reaction 1-(9Z-octadecenoyl)-sn-glycero-3-phosphate + (5Z,8Z,11Z,14Z)-eicosatetraenoyl-CoA = 1-(9Z)-octadecenoyl-2-(5Z,8Z,11Z,14Z)-eicosatetraenoyl-sn-glycero-3-phosphate + CoA. It catalyses the reaction eicosanoyl-CoA + 1-(9Z-octadecenoyl)-sn-glycero-3-phosphate = 1-(9Z)-octadecenoyl-2-eicosanoyl-sn-glycero-3-phosphate + CoA. The enzyme catalyses 1-hexadecanoyl-sn-glycero-3-phosphate + (9Z)-octadecenoyl-CoA = 1-hexadecanoyl-2-(9Z-octadecenoyl)-sn-glycero-3-phosphate + CoA. The catalysed reaction is 1-octadecanoyl-sn-glycero-3-phosphate + (9Z)-octadecenoyl-CoA = 1-octadecanoyl-2-(9Z-octadecenoyl)-sn-glycero-3-phosphate + CoA. It carries out the reaction 1-(5Z,8Z,11Z,14Z-eicosatetraenoyl)-sn-glycero-3-phosphate + (9Z)-octadecenoyl-CoA = 1-(5Z,8Z,11Z,14Z)-eicosatetraenoyl-2-(9Z)-octadecenoyl-sn-glycero-3-phosphate + CoA. Acyltransferase activity is inhibited by detergents such as Triton X-100 and 3-[(3-cholamidopropyl)dimethylammonio]-1-propanesulfonate (CHAPS). Acyltransferase activity is inhibited by the presence of magnesium and calcium. Functionally, coenzyme A-dependent lysophosphatidic acid acyltransferase that catalyzes the transfer of an acyl group on a lysophosphatidic acid. Functions preferentially with 1-oleoyl-lysophosphatidic acid followed by 1-palmitoyl-lysophosphatidic acid, 1-stearoyl-lysophosphatidic acid and 1-arachidonoyl-lysophosphatidic acid as lipid acceptor. Functions preferentially with arachidonoyl-CoA followed by oleoyl-CoA as acyl group donors. Functions in phosphatidic acid biosynthesis. May regulate the cellular storage of triacylglycerol through activation of the phospholipase PNPLA2. Involved in keratinocyte differentiation. Regulates lipid droplet fusion. The chain is 1-acylglycerol-3-phosphate O-acyltransferase ABHD5 from Homo sapiens (Human).